A 458-amino-acid chain; its full sequence is Argininosuccinate lyase (458 aa).

It belongs to the lyase 1 family. Argininosuccinate lyase subfamily.

Its subcellular location is the cytoplasm. The enzyme catalyses 2-(N(omega)-L-arginino)succinate = fumarate + L-arginine. It functions in the pathway amino-acid biosynthesis; L-arginine biosynthesis; L-arginine from L-ornithine and carbamoyl phosphate: step 3/3. This Neisseria meningitidis serogroup C / serotype 2a (strain ATCC 700532 / DSM 15464 / FAM18) protein is Argininosuccinate lyase.